Reading from the N-terminus, the 247-residue chain is Transcription factor otaR1 (247 aa).

Disordered regions lie at residues 1-48 (MEPA…ETSM) and 100-143 (DNAS…PLGN). Over residues 23 to 47 (DESSSTGLSLGSLLSSSNDLSSETS) the composition is skewed to low complexity. Polar residues predominate over residues 134–143 (ANPTSVPLGN). Residues 156-196 (KKYHEKYKERNRVAAGKSRQKQVDLIELLQAEQREEERRRK) are basic motif. Positions 156-219 (KKYHEKYKER…LDLKQELQHH (64 aa)) constitute a bZIP domain. The segment at 198–212 (LERELSQIHKELLDL) is leucine-zipper.

It is found in the nucleus. In terms of biological role, transcription factor; part of the gene cluster that mediates the biosynthesis of ochratoxin A (OTA), a mycotoxin demonstrated to have nephrotoxic, immunotoxic, genotoxic, neurotoxic, and teratogenic properties. Positively regulates the expression of the cluster genes otaA, otaB, otaC and otaD, and the subsequent production of OTA. The sequence is that of Transcription factor otaR1 from Aspergillus carbonarius (strain ITEM 5010).